The primary structure comprises 115 residues: uncharacterized protein (115 aa).

Positions 1–86 (RRPARSGGDG…LSSQLVRPSR (86 aa)) are disordered.

This is an uncharacterized protein from Homo sapiens (Human).